The following is a 985-amino-acid chain: DNA repair protein REV1 (985 aa).

The BRCT domain occupies 161–249 (QSSKIFKNCV…RLLPWQNYSL (89 aa)). An interaction with target DNA region spans residues 319–329 (YFAHSRLHHLS). DCTP contacts are provided by residues R324 and 362-366 (DFDCF). Residues 358–554 (IFHIDFDCFF…FKLDDLPGVG (197 aa)) enclose the UmuC domain. Residues D362 and F363 each contribute to the Mg(2+) site. The segment at 395–397 (TKN) is interaction with target DNA. DCTP is bound by residues 402-408 (SCNYVAR), N414, and D467. The Mg(2+) site is built by D467 and E468. Interaction with target DNA regions lie at residues 554–557 (GHST) and 620–628 (RKSLSIDIN).

This sequence belongs to the DNA polymerase type-Y family. Interacts with REV7. Mg(2+) serves as cofactor.

It localises to the nucleus. The protein resides in the mitochondrion. Functionally, deoxycytidyl transferase involved in DNA repair. Transfers a dCMP residue from dCTP to the 3'-end of a DNA primer in a template-dependent reaction. May assist in the first step in the bypass of abasic lesions by the insertion of a nucleotide opposite the lesion. Required for normal induction of mutations by physical and chemical agents. Involved in mitochondrial DNA mutagenesis. In Saccharomyces cerevisiae (strain ATCC 204508 / S288c) (Baker's yeast), this protein is DNA repair protein REV1 (REV1).